The following is a 360-amino-acid chain: Peptide chain release factor 1 (360 aa).

An N5-methylglutamine modification is found at Gln-236. Residues 288–308 (QDEQDAERKSTIGTGDRSERI) form a disordered region. A compositionally biased stretch (basic and acidic residues) spans 293–308 (AERKSTIGTGDRSERI).

It belongs to the prokaryotic/mitochondrial release factor family. Methylated by PrmC. Methylation increases the termination efficiency of RF1.

Its subcellular location is the cytoplasm. In terms of biological role, peptide chain release factor 1 directs the termination of translation in response to the peptide chain termination codons UAG and UAA. In Streptococcus equi subsp. zooepidemicus (strain H70), this protein is Peptide chain release factor 1.